Here is a 565-residue protein sequence, read N- to C-terminus: Oxygen-dependent choline dehydrogenase (565 aa).

Position 6-35 (6-35) interacts with FAD; that stretch reads DYIIVGAGSAGNTLATRLTEDASVSVLLLE. The tract at residues 182 to 203 is disordered; it reads QQEGFGPMDRSVTKKGRRSSTA. H475 functions as the Proton acceptor in the catalytic mechanism.

This sequence belongs to the GMC oxidoreductase family. Requires FAD as cofactor.

The catalysed reaction is choline + A = betaine aldehyde + AH2. The enzyme catalyses betaine aldehyde + NAD(+) + H2O = glycine betaine + NADH + 2 H(+). It participates in amine and polyamine biosynthesis; betaine biosynthesis via choline pathway; betaine aldehyde from choline (cytochrome c reductase route): step 1/1. Functionally, involved in the biosynthesis of the osmoprotectant glycine betaine. Catalyzes the oxidation of choline to betaine aldehyde and betaine aldehyde to glycine betaine at the same rate. This is Oxygen-dependent choline dehydrogenase from Pseudomonas entomophila (strain L48).